The following is a 277-amino-acid chain: MSERDKTLEHAPLGRESAYPEHYDAGLLFPIPRQANRAPLGLDDAALPFEGEDEWHAFELSWLDAKGKPIVAVARFRLPADSPSLIESKSWKLYLNSFNQTRFDRREAVIDTLERDLAQAAGASVAVALFGVEDDALMPRALPGECLDDLDVSIEYYTPTPGLLEVGEEIVEETLHSHLLKSNCPVTGQPDWGSVLIRYRGPRLERDALLKYLISYRQHQDFHEHCVEHLFVDLMARARPERLLVMARYVRRGGLDISPWRGTPGERPPTPLRLARQ.

86 to 88 (IES) is a substrate binding site. Residue 88-89 (SK) coordinates NADPH. The active-site Thioimide intermediate is cysteine 184. The active-site Proton donor is the aspartate 191. 223–224 (HE) serves as a coordination point for substrate. 252–253 (RG) contributes to the NADPH binding site.

Belongs to the GTP cyclohydrolase I family. QueF type 2 subfamily. In terms of assembly, homodimer.

Its subcellular location is the cytoplasm. The enzyme catalyses 7-aminomethyl-7-carbaguanine + 2 NADP(+) = 7-cyano-7-deazaguanine + 2 NADPH + 3 H(+). It functions in the pathway tRNA modification; tRNA-queuosine biosynthesis. In terms of biological role, catalyzes the NADPH-dependent reduction of 7-cyano-7-deazaguanine (preQ0) to 7-aminomethyl-7-deazaguanine (preQ1). The sequence is that of NADPH-dependent 7-cyano-7-deazaguanine reductase from Chromohalobacter salexigens (strain ATCC BAA-138 / DSM 3043 / CIP 106854 / NCIMB 13768 / 1H11).